A 311-amino-acid polypeptide reads, in one-letter code: Pyrimidine-specific ribonucleoside hydrolase RihA (311 aa).

His-240 is a catalytic residue.

This sequence belongs to the IUNH family. RihA subfamily.

Its function is as follows. Hydrolyzes with equal efficiency cytidine or uridine to ribose and cytosine or uracil, respectively. In Escherichia coli (strain SMS-3-5 / SECEC), this protein is Pyrimidine-specific ribonucleoside hydrolase RihA.